Here is a 188-residue protein sequence, read N- to C-terminus: Elongation factor P (188 aa).

K34 is subject to N6-(3,6-diaminohexanoyl)-5-hydroxylysine.

The protein belongs to the elongation factor P family. Post-translationally, may be beta-lysylated on the epsilon-amino group of Lys-34 by the combined action of EpmA and EpmB, and then hydroxylated on the C5 position of the same residue by EpmC (if this protein is present). Lysylation is critical for the stimulatory effect of EF-P on peptide-bond formation. The lysylation moiety may extend toward the peptidyltransferase center and stabilize the terminal 3-CCA end of the tRNA. Hydroxylation of the C5 position on Lys-34 may allow additional potential stabilizing hydrogen-bond interactions with the P-tRNA.

Its subcellular location is the cytoplasm. It functions in the pathway protein biosynthesis; polypeptide chain elongation. Involved in peptide bond synthesis. Alleviates ribosome stalling that occurs when 3 or more consecutive Pro residues or the sequence PPG is present in a protein, possibly by augmenting the peptidyl transferase activity of the ribosome. Modification of Lys-34 is required for alleviation. This is Elongation factor P from Hamiltonella defensa subsp. Acyrthosiphon pisum (strain 5AT).